Here is a 294-residue protein sequence, read N- to C-terminus: Cytidine deaminase (294 aa).

2 consecutive CMP/dCMP-type deaminase domains span residues 48–168 (DEDA…FGPK) and 186–294 (LTGD…VLLG). Position 89-91 (89-91 (NME)) interacts with substrate. His-102 contacts Zn(2+). The Proton donor role is filled by Glu-104. Cys-129 and Cys-132 together coordinate Zn(2+).

Belongs to the cytidine and deoxycytidylate deaminase family. As to quaternary structure, homodimer. Zn(2+) serves as cofactor.

The enzyme catalyses cytidine + H2O + H(+) = uridine + NH4(+). The catalysed reaction is 2'-deoxycytidine + H2O + H(+) = 2'-deoxyuridine + NH4(+). This enzyme scavenges exogenous and endogenous cytidine and 2'-deoxycytidine for UMP synthesis. The sequence is that of Cytidine deaminase from Salmonella enteritidis PT4 (strain P125109).